Consider the following 177-residue polypeptide: Large ribosomal subunit protein uL6 (177 aa).

Belongs to the universal ribosomal protein uL6 family. In terms of assembly, part of the 50S ribosomal subunit.

Functionally, this protein binds to the 23S rRNA, and is important in its secondary structure. It is located near the subunit interface in the base of the L7/L12 stalk, and near the tRNA binding site of the peptidyltransferase center. This is Large ribosomal subunit protein uL6 from Rickettsia massiliae (strain Mtu5).